The chain runs to 342 residues: tRNA dimethylallyltransferase (342 aa).

39–46 (GPTGSGKT) contributes to the ATP binding site. 41 to 46 (TGSGKT) is a binding site for substrate. The interval 64-67 (DSMQ) is interaction with substrate tRNA.

This sequence belongs to the IPP transferase family. As to quaternary structure, monomer. The cofactor is Mg(2+).

The catalysed reaction is adenosine(37) in tRNA + dimethylallyl diphosphate = N(6)-dimethylallyladenosine(37) in tRNA + diphosphate. Its function is as follows. Catalyzes the transfer of a dimethylallyl group onto the adenine at position 37 in tRNAs that read codons beginning with uridine, leading to the formation of N6-(dimethylallyl)adenosine (i(6)A). This chain is tRNA dimethylallyltransferase, found in Chlamydia pneumoniae (Chlamydophila pneumoniae).